A 471-amino-acid chain; its full sequence is 3-isopropylmalate dehydratase large subunit (471 aa).

Residues C351, C414, and C417 each coordinate [4Fe-4S] cluster.

The protein belongs to the aconitase/IPM isomerase family. LeuC type 1 subfamily. Heterodimer of LeuC and LeuD. [4Fe-4S] cluster serves as cofactor.

The enzyme catalyses (2R,3S)-3-isopropylmalate = (2S)-2-isopropylmalate. It participates in amino-acid biosynthesis; L-leucine biosynthesis; L-leucine from 3-methyl-2-oxobutanoate: step 2/4. In terms of biological role, catalyzes the isomerization between 2-isopropylmalate and 3-isopropylmalate, via the formation of 2-isopropylmaleate. In Colwellia psychrerythraea (strain 34H / ATCC BAA-681) (Vibrio psychroerythus), this protein is 3-isopropylmalate dehydratase large subunit.